The chain runs to 244 residues: Pyridoxine 5'-phosphate synthase (244 aa).

Asn9 contributes to the 3-amino-2-oxopropyl phosphate binding site. 11–12 is a 1-deoxy-D-xylulose 5-phosphate binding site; that stretch reads DH. Arg20 serves as a coordination point for 3-amino-2-oxopropyl phosphate. The Proton acceptor role is filled by His45. 1-deoxy-D-xylulose 5-phosphate contacts are provided by Arg47 and His52. Glu72 acts as the Proton acceptor in catalysis. Position 102 (Thr102) interacts with 1-deoxy-D-xylulose 5-phosphate. His193 serves as the catalytic Proton donor. 3-amino-2-oxopropyl phosphate contacts are provided by residues Gly194 and 215 to 216; that span reads GH.

This sequence belongs to the PNP synthase family. Homooctamer; tetramer of dimers.

It localises to the cytoplasm. It catalyses the reaction 3-amino-2-oxopropyl phosphate + 1-deoxy-D-xylulose 5-phosphate = pyridoxine 5'-phosphate + phosphate + 2 H2O + H(+). Its pathway is cofactor biosynthesis; pyridoxine 5'-phosphate biosynthesis; pyridoxine 5'-phosphate from D-erythrose 4-phosphate: step 5/5. Catalyzes the complicated ring closure reaction between the two acyclic compounds 1-deoxy-D-xylulose-5-phosphate (DXP) and 3-amino-2-oxopropyl phosphate (1-amino-acetone-3-phosphate or AAP) to form pyridoxine 5'-phosphate (PNP) and inorganic phosphate. In Blochmanniella pennsylvanica (strain BPEN), this protein is Pyridoxine 5'-phosphate synthase.